The primary structure comprises 303 residues: Cobalamin biosynthesis protein CobD (303 aa).

The next 4 helical transmembrane spans lie at 65–85 (LLAW…IVLL), 147–167 (DAVF…VVLY), 235–255 (AGPV…GAAI), and 283–303 (LVWA…WLYA).

Belongs to the CobD/CbiB family.

The protein resides in the cell membrane. The protein operates within cofactor biosynthesis; adenosylcobalamin biosynthesis. Converts cobyric acid to cobinamide by the addition of aminopropanol on the F carboxylic group. The polypeptide is Cobalamin biosynthesis protein CobD (Stutzerimonas stutzeri (strain A1501) (Pseudomonas stutzeri)).